We begin with the raw amino-acid sequence, 147 residues long: Lysozyme C-1 (147 aa).

The signal sequence occupies residues 1-18 (MKALLTLVFCLLPLAAQG). Residues 19-147 (KVYSRCELAA…VSKWIRGCRL (129 aa)) form the C-type lysozyme domain. Disulfide bonds link Cys-24–Cys-145, Cys-48–Cys-133, Cys-82–Cys-98, and Cys-94–Cys-112. Catalysis depends on residues Glu-53 and Asp-70.

Belongs to the glycosyl hydrolase 22 family.

Its subcellular location is the secreted. The catalysed reaction is Hydrolysis of (1-&gt;4)-beta-linkages between N-acetylmuramic acid and N-acetyl-D-glucosamine residues in a peptidoglycan and between N-acetyl-D-glucosamine residues in chitodextrins.. In terms of biological role, lysozymes have primarily a bacteriolytic function; those in tissues and body fluids are associated with the monocyte-macrophage system and enhance the activity of immunoagents. This chain is Lysozyme C-1, found in Anas platyrhynchos (Mallard).